Reading from the N-terminus, the 92-residue chain is UPF0250 protein Smlt4048 (92 aa).

It belongs to the UPF0250 family.

The chain is UPF0250 protein Smlt4048 from Stenotrophomonas maltophilia (strain K279a).